The following is a 242-amino-acid chain: DNA-directed RNA polymerase III subunit rpc5 (242 aa).

2 disordered regions span residues 1 to 22 (MSFS…TEEQ) and 153 to 172 (LKAA…PRGP). Residues 155–172 (AAAGPSNSSSGTSTPRGP) show a composition bias toward low complexity.

As to quaternary structure, component of the RNA polymerase III (Pol III) complex consisting of 17 subunits.

It localises to the cytoplasm. It is found in the nucleus. DNA-dependent RNA polymerase catalyzes the transcription of DNA into RNA using the four ribonucleoside triphosphates as substrates. Specific peripheric component of RNA polymerase III which synthesizes small RNAs, such as 5S rRNA and tRNAs. The RPC53/RPC4-RPC37/RPC5 subcomplex is required for terminator recognition and reinitiation. This chain is DNA-directed RNA polymerase III subunit rpc5 (rpc37), found in Schizosaccharomyces pombe (strain 972 / ATCC 24843) (Fission yeast).